The chain runs to 363 residues: Thioredoxin domain-containing protein C13F5.05, mitochondrial (363 aa).

The transit peptide at M1–G24 directs the protein to the mitochondrion. The Thioredoxin domain occupies N32–S141.

It localises to the mitochondrion. The polypeptide is Thioredoxin domain-containing protein C13F5.05, mitochondrial (Schizosaccharomyces pombe (strain 972 / ATCC 24843) (Fission yeast)).